We begin with the raw amino-acid sequence, 653 residues long: Sodium-dependent phosphate transporter 2 (653 aa).

Residues 1–5 (MAIDG) lie on the Extracellular side of the membrane. A helical transmembrane segment spans residues 6–26 (YLWMVILGFIIAFILAFSVGA). Residues 27-46 (NDVANSFGTAVGSGVVTLRQ) lie on the Cytoplasmic side of the membrane. A helical transmembrane segment spans residues 47–67 (ACILASIFETTGSVLLGAKVG). The Extracellular segment spans residues 68–86 (ETIRKGIIDVNLYNETVET). Asparagine 81 carries N-linked (GlcNAc...) asparagine glycosylation. The helical transmembrane segment at 87–107 (LMAGEVSAMVGSAVWQLIASF) threads the bilayer. Residues 108–109 (LR) lie on the Cytoplasmic side of the membrane. The chain crosses the membrane as a helical span at residues 110 to 130 (LPISGTHCIVGSTIGFSLVAI). The Extracellular portion of the chain corresponds to 131–142 (GTQGVQWMELVK). The helical transmembrane segment at 143 to 163 (IVASWFISPLLSGFMSGVLFI) threads the bilayer. The Cytoplasmic portion of the chain corresponds to 164-190 (LIRIFILKKEDPVPNGLRALPVFYAAT). The helical transmembrane segment at 191–211 (IAINVFSIMYTGAPVLGLVLP) threads the bilayer. Residues 212–213 (IW) lie on the Extracellular side of the membrane. A helical membrane pass occupies residues 214–234 (AIALISFGVALLFALFVWLFV). Residues 235–483 (CPWMRRKIAG…EEKEEKDTAE (249 aa)) are Cytoplasmic-facing. Serine 253, serine 256, serine 259, and serine 268 each carry phosphoserine. The disordered stretch occupies residues 275-311 (PGAKANDDSTVPLTGSAGEPSGTSEGTSVGNHPRASY). Positions 295-304 (SGTSEGTSVG) are enriched in polar residues. Phosphoserine is present on residues serine 316 and serine 385. The tract at residues 459 to 478 (SELTDPDQPRDDPAEEEKEE) is disordered. Residues 484–504 (VHLLFHFLQVLTACFGSFAHG) traverse the membrane as a helical segment. Residues 505–531 (GNDVSNAIGPLVALWLIYEQGAVLQEA) are Extracellular-facing. A helical transmembrane segment spans residues 532-552 (VTPVWLLFYGGVGICTGLWVW). Topologically, residues 553 to 572 (GRRVIQTMGKDLTPITPSSG) are cytoplasmic. The helical transmembrane segment at 573 to 587 (FTIELASAFTVVIAS) threads the bilayer. Over 588–594 (NVGLPVS) the chain is Extracellular. A helical membrane pass occupies residues 595–610 (TTHCKVGSVVAVGWIR). The Cytoplasmic segment spans residues 611–622 (SRKAVDWRLFRN). A helical transmembrane segment spans residues 623 to 643 (IFVAWFVTVPVAGLFSAAIMA). The Extracellular segment spans residues 644 to 653 (LLMYGILPYV).

It belongs to the inorganic phosphate transporter (PiT) (TC 2.A.20) family. In terms of assembly, homodimer.

The protein localises to the cell membrane. It is found in the apical cell membrane. The enzyme catalyses 2 Na(+)(out) + phosphate(out) = 2 Na(+)(in) + phosphate(in). Its function is as follows. Sodium-phosphate symporter which preferentially transports the monovalent form of phosphate with a stoichiometry of two sodium ions per phosphate ion. Plays a critical role in the determination of bone quality and strength by providing phosphate for bone mineralization. Required to maintain normal cerebrospinal fluid phosphate levels. Mediates phosphate-induced calcification of vascular smooth muscle cells (VCMCs) and can functionally compensate for loss of SLC20A1 in VCMCs. In terms of biological role, (Microbial infection) Functions as a retroviral receptor for feline leukemia virus subgroup B (FeLV-B). The sequence is that of Sodium-dependent phosphate transporter 2 (SLC20A2) from Felis catus (Cat).